A 160-amino-acid polypeptide reads, in one-letter code: Putative NrdI-like protein (160 aa).

It belongs to the NrdI family.

This chain is Putative NrdI-like protein, found in Streptococcus pyogenes serotype M6 (strain ATCC BAA-946 / MGAS10394).